A 1122-amino-acid polypeptide reads, in one-letter code: Receptor-type guanylate cyclase gcy-5 (1122 aa).

Residues 1-19 (MRLLYFSMVLLWVLGASEC) form the signal peptide. Over 20–486 (QVIPSSRRTL…CPVQFWDQYG (467 aa)) the chain is Extracellular. N-linked (GlcNAc...) asparagine glycosylation is found at Asn252, Asn299, Asn344, Asn350, Asn378, Asn434, and Asn439. The helical transmembrane segment at 487-507 (VLIFVASIVLIFLICIMLMCF) threads the bilayer. At 508-1122 (GFMIRGRRAE…KSKMDTLKVV (615 aa)) the chain is on the cytoplasmic side. The tract at residues 536–562 (QKEKRKPNSRRSLQSGPSTITGESKMT) is disordered. The Protein kinase domain maps to 542–830 (PNSRRSLQSG…NTNLMDHVFN (289 aa)). Positions 545-559 (RRSLQSGPSTITGES) are enriched in polar residues. In terms of domain architecture, Guanylate cyclase spans 888–1018 (TVLFSDVVKF…DTVNTASRME (131 aa)). The disordered stretch occupies residues 1071–1122 (SDTKSLSTRTTPPITDENWPPQMKEDLKKRAVTPYPERQRSGKSKMDTLKVV). The span at 1074–1083 (KSLSTRTTPP) shows a compositional bias: polar residues. Basic and acidic residues predominate over residues 1107–1122 (ERQRSGKSKMDTLKVV).

It belongs to the adenylyl cyclase class-4/guanylyl cyclase family. In terms of tissue distribution, expressed in both ASEL and ASER neurons during early embryonic stages and becomes specifically expressed in ASER neuron in early larval stage.

The protein localises to the cell membrane. It catalyses the reaction GTP = 3',5'-cyclic GMP + diphosphate. Its function is as follows. Guanylate cyclase involved in the production of the second messenger cGMP. Unlike other guanylate cyclases expressed in ASE neurons, may not play a role in chemotaxis responses to salt ions mediated by ASE sensory neurons. In Caenorhabditis elegans, this protein is Receptor-type guanylate cyclase gcy-5.